The sequence spans 197 residues: Phosphoheptose isomerase (197 aa).

One can recognise an SIS domain in the interval 34 to 196 (MVHCLLGGNK…DRTLFPQDEQ (163 aa)). A substrate-binding site is contributed by 49–51 (NGG). Residues histidine 58 and glutamate 62 each contribute to the Zn(2+) site. Substrate-binding positions include glutamate 62, 91–92 (ND), 117–119 (STS), serine 122, and glutamine 172. The Zn(2+) site is built by glutamine 172 and histidine 180.

This sequence belongs to the SIS family. GmhA subfamily. Homotetramer. Requires Zn(2+) as cofactor.

It is found in the cytoplasm. The enzyme catalyses 2 D-sedoheptulose 7-phosphate = D-glycero-alpha-D-manno-heptose 7-phosphate + D-glycero-beta-D-manno-heptose 7-phosphate. It participates in carbohydrate biosynthesis; D-glycero-D-manno-heptose 7-phosphate biosynthesis; D-glycero-alpha-D-manno-heptose 7-phosphate and D-glycero-beta-D-manno-heptose 7-phosphate from sedoheptulose 7-phosphate: step 1/1. In terms of biological role, catalyzes the isomerization of sedoheptulose 7-phosphate in D-glycero-D-manno-heptose 7-phosphate. The sequence is that of Phosphoheptose isomerase from Shewanella baltica (strain OS223).